The primary structure comprises 274 residues: NAD(P)H-quinone oxidoreductase subunit K, chloroplastic (274 aa).

Composition is skewed to polar residues over residues 1 to 10 and 18 to 27; these read MVINQKNLSS and SGSQSSTKAD. A disordered region spans residues 1–27; the sequence is MVINQKNLSSPVAPYDKSGSQSSTKAD. [4Fe-4S] cluster is bound by residues cysteine 90, cysteine 91, cysteine 155, and cysteine 186.

Belongs to the complex I 20 kDa subunit family. In terms of assembly, NDH is composed of at least 16 different subunits, 5 of which are encoded in the nucleus. [4Fe-4S] cluster serves as cofactor.

It localises to the plastid. The protein localises to the chloroplast thylakoid membrane. The catalysed reaction is a plastoquinone + NADH + (n+1) H(+)(in) = a plastoquinol + NAD(+) + n H(+)(out). It carries out the reaction a plastoquinone + NADPH + (n+1) H(+)(in) = a plastoquinol + NADP(+) + n H(+)(out). NDH shuttles electrons from NAD(P)H:plastoquinone, via FMN and iron-sulfur (Fe-S) centers, to quinones in the photosynthetic chain and possibly in a chloroplast respiratory chain. The immediate electron acceptor for the enzyme in this species is believed to be plastoquinone. Couples the redox reaction to proton translocation, and thus conserves the redox energy in a proton gradient. The protein is NAD(P)H-quinone oxidoreductase subunit K, chloroplastic of Chlorokybus atmophyticus (Soil alga).